Here is a 401-residue protein sequence, read N- to C-terminus: MEKKKVVLAYSGGLDTSVAIKWLQEKNYDVIALCLDLGEGEDLEFVKEKALSVGAIKSYMIDVQEEFMNEYALVALQGHTLYEGKYPLVSALSRPLIAKKLVEIAELEGASAVAHGCTGKGNDQVRFEVSIQALNPYLEVIAPVREWKWSREEEIAYAKENDVPIPINLDSPFSIDQNLWGRSNECGILEDPWAAPPEDAYEMTVPLENTPDQPEFVEIGFEEGVPTTLNGTTYSLSQLMKTLNSLAGKHGIGRIDHVENRLVGIKSREVYECPAAMTLLTAHKELEDLTLVKEVAHFKPMMEQKLTELIYNGLWFSPLKQALVAFLQETQKTVSGTVRVKLFKGHAIVEGRKSEYSLYDENLATYTVNDEFNHDAAVGFISLFGLPTKVYSQVNQKKVEA.

9-17 (AYSGGLDTS) provides a ligand contact to ATP. Residue Tyr86 participates in L-citrulline binding. Position 116 (Gly116) interacts with ATP. Thr118, Asn122, and Asp123 together coordinate L-aspartate. Asn122 contributes to the L-citrulline binding site. L-citrulline-binding residues include Arg126, Ser174, Ser183, Glu259, and Tyr271.

The protein belongs to the argininosuccinate synthase family. Type 1 subfamily. As to quaternary structure, homotetramer.

The protein resides in the cytoplasm. It carries out the reaction L-citrulline + L-aspartate + ATP = 2-(N(omega)-L-arginino)succinate + AMP + diphosphate + H(+). Its pathway is amino-acid biosynthesis; L-arginine biosynthesis; L-arginine from L-ornithine and carbamoyl phosphate: step 2/3. The chain is Argininosuccinate synthase from Bacillus cytotoxicus (strain DSM 22905 / CIP 110041 / 391-98 / NVH 391-98).